The following is a 210-amino-acid chain: Large ribosomal subunit protein bL25 (210 aa).

The disordered stretch occupies residues leucine 179 to glycine 210. The segment covering glutamate 201–glycine 210 has biased composition (basic and acidic residues).

This sequence belongs to the bacterial ribosomal protein bL25 family. CTC subfamily. As to quaternary structure, part of the 50S ribosomal subunit; part of the 5S rRNA/L5/L18/L25 subcomplex. Contacts the 5S rRNA. Binds to the 5S rRNA independently of L5 and L18.

This is one of the proteins that binds to the 5S RNA in the ribosome where it forms part of the central protuberance. The sequence is that of Large ribosomal subunit protein bL25 from Geobacillus thermodenitrificans (strain NG80-2).